We begin with the raw amino-acid sequence, 259 residues long: MLANVVSRKASGLRQTPARATVAVKSVSGRRTTAAEPQTAAPVAAEDVFAYTKNLPGVTAPFEGVFDPAGFLATASIKDVRRWRESEITHGRVAMLAALGFVVGEQLQDFPLFFNWDGRVSGPAIYHFQQIGQGFWEPLLIAIGVAESYRVAVGWATPTGTGFNSLKDDYEPGDLGFDPLGLKPTDPEELKVMQTKELNNGRLAMIAIAAFVAQELVEQTEIFEHLALRFEKEAILELDDIERDLGLPVTPLPDNLKSL.

The N-terminal 45 residues, 1-45 (MLANVVSRKASGLRQTPARATVAVKSVSGRRTTAAEPQTAAPVAA), are a transit peptide targeting the chloroplast. Position 51 (Tyr51) interacts with chlorophyll b. Chlorophyll a-binding residues include Phe66, Glu87, and His90. Residue Arg92 participates in chlorophyll b binding. A helical membrane pass occupies residues 93–113 (VAMLAALGFVVGEQLQDFPLF). Residue Gln130 coordinates chlorophyll a. Residues 137–157 (EPLLIAIGVAESYRVAVGWAT) traverse the membrane as a helical segment. Residues Glu147 and Arg150 each contribute to the chlorophyll b site. Residues Lys196, Glu197, Asn200, Arg202, and Gln214 each contribute to the chlorophyll a site. A helical membrane pass occupies residues 203–223 (LAMIAIAAFVAQELVEQTEIF).

This sequence belongs to the light-harvesting chlorophyll a/b-binding (LHC) protein family. As to quaternary structure, interacts with the photosystem II-light-harvesting complex II (PSII-LHCII) supercomplex to form PSII-LHCII-LHCSR3 supercomplex.

The protein localises to the plastid. The protein resides in the chloroplast thylakoid membrane. Functionally, required for non-photochemical quenching (NPQ), a mechanism that converts and dissipates the harmful excess absorbed light energy into heat and protect the photosynthetic apparatus from photo-oxidative damage. NPQ includes dissipating excess light energy to heat (qE) and the reversible coupling of LHCII to photosystems (state transitions or qT), which are considered separate NPQ mechanisms. Is responsible for most of the excess light energy to heat dissipation (qE), also known as energy-dependent chlorophyll fluorescence quenching activity of chlorophyll excited states. Involved in a de-coupling and re-coupling of energy transfer to photosystem II (PSII) during qT. Binds chlorophyll a and b. Is able to sense luminal acidification of the thylakoid membranes, which occurs along with elevated electron flow caused by excess light. Establishes interactions with photosystem II (PSII) antenna components upon lumen acidification, and protonation of lumen-exposed, negatively charged residues both in LHCSR3 and in PSII antenna components. Mediates excitation energy transfer from light-harvesting complex II (LHCII) to photosystem I (PSI), rather than photosystem II (PSII), at low pH, which mimics the acidified lumen of the thylakoid membranes in high light-exposed chloroplasts. Activates PSI-dependent fluorescence quenching in addition to dissipating excitation energy in LHCII to avoid photooxidative stress under excess light. Contributes with PGRL1 to the regulation of electron flow upstream of photosystem I (PSI), and limits the accumulation of electrons on the PSI acceptor side, thus avoiding PSI photoinhibition. This Chlamydomonas reinhardtii (Chlamydomonas smithii) protein is Light-harvesting complex stress-related protein 3.1, chloroplastic.